The following is a 444-amino-acid chain: Argininosuccinate synthase (444 aa).

ATP contacts are provided by residues 17-25 and alanine 43; that span reads AFSGGLDTS. Tyrosine 99 contributes to the L-citrulline binding site. The ATP site is built by glycine 129 and threonine 131. Residues threonine 131, asparagine 135, and aspartate 136 each contribute to the L-aspartate site. Asparagine 135 is a binding site for L-citrulline. Aspartate 136 is an ATP binding site. L-citrulline-binding residues include arginine 139 and serine 192. Residue aspartate 194 coordinates ATP. Residues threonine 201, glutamate 203, and glutamate 280 each coordinate L-citrulline.

It belongs to the argininosuccinate synthase family. Type 2 subfamily. Homotetramer.

Its subcellular location is the cytoplasm. It catalyses the reaction L-citrulline + L-aspartate + ATP = 2-(N(omega)-L-arginino)succinate + AMP + diphosphate + H(+). It participates in amino-acid biosynthesis; L-arginine biosynthesis; L-arginine from L-ornithine and carbamoyl phosphate: step 2/3. The chain is Argininosuccinate synthase from Paraburkholderia phymatum (strain DSM 17167 / CIP 108236 / LMG 21445 / STM815) (Burkholderia phymatum).